Here is a 218-residue protein sequence, read N- to C-terminus: Pyridoxine/pyridoxamine 5'-phosphate oxidase (218 aa).

Substrate contacts are provided by residues Arg-12–Tyr-15 and Arg-70. Residues Arg-65–Arg-70, Tyr-80–Thr-81, Lys-87, and Gln-109 contribute to the FMN site. Tyr-127, Arg-131, and Ser-135 together coordinate substrate. FMN-binding positions include Gln-145 to Ser-146 and Trp-191. Position 197 to 199 (Arg-197 to His-199) interacts with substrate. Arg-201 contributes to the FMN binding site.

The protein belongs to the pyridoxamine 5'-phosphate oxidase family. In terms of assembly, homodimer. It depends on FMN as a cofactor.

The catalysed reaction is pyridoxamine 5'-phosphate + O2 + H2O = pyridoxal 5'-phosphate + H2O2 + NH4(+). The enzyme catalyses pyridoxine 5'-phosphate + O2 = pyridoxal 5'-phosphate + H2O2. Its pathway is cofactor metabolism; pyridoxal 5'-phosphate salvage; pyridoxal 5'-phosphate from pyridoxamine 5'-phosphate: step 1/1. It functions in the pathway cofactor metabolism; pyridoxal 5'-phosphate salvage; pyridoxal 5'-phosphate from pyridoxine 5'-phosphate: step 1/1. In terms of biological role, catalyzes the oxidation of either pyridoxine 5'-phosphate (PNP) or pyridoxamine 5'-phosphate (PMP) into pyridoxal 5'-phosphate (PLP). The protein is Pyridoxine/pyridoxamine 5'-phosphate oxidase of Deinococcus geothermalis (strain DSM 11300 / CIP 105573 / AG-3a).